A 111-amino-acid chain; its full sequence is Ig kappa chain V region 3368 (111 aa).

The framework-1 stretch occupies residues 1 to 24; sequence ADIVMTQTPSSVSAAVGGTVTIKC. A complementarity-determining-1 region spans residues 25-35; it reads QASESIGNELA. Positions 36-50 are framework-2; that stretch reads WYQQKPGQPPKLLIY. The segment at 51–57 is complementarity-determining-2; that stretch reads RASKLAS. Residues 58 to 89 are framework-3; that stretch reads GVSSRFKGSGSGTEFTLTISGVQCDDAGIYYC. The complementarity-determining-3 stretch occupies residues 90–101; that stretch reads QQDWNSNNVVNN. The interval 102 to 111 is framework-4; sequence FGGGTEVVVK.

In Oryctolagus cuniculus (Rabbit), this protein is Ig kappa chain V region 3368.